The following is a 228-amino-acid chain: 30 kDa heat shock protein (228 aa).

Disordered stretches follow at residues 34 to 53 (EVQG…PTRT), 117 to 136 (KGEP…DVDE), and 144 to 174 (TATG…APAE). A sHSP domain is found at 49-228 (QPTRTFSPKF…KHETIRIAIN (180 aa)). Positions 144 to 158 (TATGANNQNNQQVAQ) are enriched in low complexity.

The protein belongs to the small heat shock protein (HSP20) family.

It localises to the cytoplasm. In Neurospora crassa (strain ATCC 24698 / 74-OR23-1A / CBS 708.71 / DSM 1257 / FGSC 987), this protein is 30 kDa heat shock protein (hsp30).